We begin with the raw amino-acid sequence, 142 residues long: Small ribosomal subunit protein eS6 (142 aa).

Residues 117–142 (EKPLDELAPKKEKKEGAAGGRAPAKK) are disordered. Basic and acidic residues predominate over residues 118–132 (KPLDELAPKKEKKEG).

Belongs to the eukaryotic ribosomal protein eS6 family.

This Methanocella arvoryzae (strain DSM 22066 / NBRC 105507 / MRE50) protein is Small ribosomal subunit protein eS6.